We begin with the raw amino-acid sequence, 160 residues long: NAD(P)H-quinone oxidoreductase subunit I, chloroplastic (160 aa).

4Fe-4S ferredoxin-type domains are found at residues 55–84 (GRIH…VDWK) and 95–124 (LNYS…MTEE). The [4Fe-4S] cluster site is built by Cys-64, Cys-67, Cys-70, Cys-74, Cys-104, Cys-107, Cys-110, and Cys-114.

Belongs to the complex I 23 kDa subunit family. As to quaternary structure, NDH is composed of at least 16 different subunits, 5 of which are encoded in the nucleus. The cofactor is [4Fe-4S] cluster.

It localises to the plastid. The protein localises to the chloroplast thylakoid membrane. The catalysed reaction is a plastoquinone + NADH + (n+1) H(+)(in) = a plastoquinol + NAD(+) + n H(+)(out). The enzyme catalyses a plastoquinone + NADPH + (n+1) H(+)(in) = a plastoquinol + NADP(+) + n H(+)(out). NDH shuttles electrons from NAD(P)H:plastoquinone, via FMN and iron-sulfur (Fe-S) centers, to quinones in the photosynthetic chain and possibly in a chloroplast respiratory chain. The immediate electron acceptor for the enzyme in this species is believed to be plastoquinone. Couples the redox reaction to proton translocation, and thus conserves the redox energy in a proton gradient. This Cucumis sativus (Cucumber) protein is NAD(P)H-quinone oxidoreductase subunit I, chloroplastic.